Consider the following 478-residue polypeptide: MNLSIQDELQLFSEELYRHLTPSLLEELAKELGFVKRKRKFSGNELATICIWVSQRTASDSLVRLCSQLHAATGPLMSPEGLNKRFDKKAVEFLKYIFSALWKSKLCKTSAISSAALTYFQRIRILDATIFQVPKHLAHVYPGSGGCAQTAGIKIQLEYDLHSGQFLNFQVGPGKNNDKTFGTDCLDTLRPGDLCIRDLGYFSLEDLDQMDQRGVCYISRLKLNHTVYTKNPFPEYFRNGTIKKQSQYIQVDLENIMHTLKPGQTYEIKESYIGKNQRLFTRVIIYRLTEEQILERRKKQSYTESKKGITFSEKSKRLTGINIYVTNTPWEVVPMEQIHDFYSLRWQIEIIFKTWKSLFQIHHWQTIKQERLECHVYGKLIAIFICSSTMFKMRQLLLQKHKRELSEYKAIGMIQDHLSLLYQAIQRNTRIITKVLIRLFTLLKKNGRKSHRYEKKTIFDIMGVVYEYNGLRKQKKAA.

It belongs to the transposase 11 family.

Functionally, involved in the transposition of the insertion sequence. This chain is Transposase for insertion sequence element IS231C, found in Bacillus thuringiensis subsp. berliner.